A 464-amino-acid chain; its full sequence is Siroheme synthase (464 aa).

Residues 1 to 203 (MEYLPLFHNL…GQGAEAERLL (203 aa)) are precorrin-2 dehydrogenase /sirohydrochlorin ferrochelatase. Residues 22–23 (EI) and 43–44 (PE) each bind NAD(+). Phosphoserine is present on Ser128. Positions 216-464 (GEVYLVGAGP…AWFEGAQSEV (249 aa)) are uroporphyrinogen-III C-methyltransferase. Pro225 provides a ligand contact to S-adenosyl-L-methionine. Asp248 acts as the Proton acceptor in catalysis. Lys270 (proton donor) is an active-site residue. S-adenosyl-L-methionine is bound by residues 301-303 (GGD), Ile306, 331-332 (TA), Met383, and Gly412.

It in the N-terminal section; belongs to the precorrin-2 dehydrogenase / sirohydrochlorin ferrochelatase family. In the C-terminal section; belongs to the precorrin methyltransferase family.

The catalysed reaction is uroporphyrinogen III + 2 S-adenosyl-L-methionine = precorrin-2 + 2 S-adenosyl-L-homocysteine + H(+). It catalyses the reaction precorrin-2 + NAD(+) = sirohydrochlorin + NADH + 2 H(+). It carries out the reaction siroheme + 2 H(+) = sirohydrochlorin + Fe(2+). It functions in the pathway cofactor biosynthesis; adenosylcobalamin biosynthesis; precorrin-2 from uroporphyrinogen III: step 1/1. Its pathway is cofactor biosynthesis; adenosylcobalamin biosynthesis; sirohydrochlorin from precorrin-2: step 1/1. It participates in porphyrin-containing compound metabolism; siroheme biosynthesis; precorrin-2 from uroporphyrinogen III: step 1/1. The protein operates within porphyrin-containing compound metabolism; siroheme biosynthesis; siroheme from sirohydrochlorin: step 1/1. It functions in the pathway porphyrin-containing compound metabolism; siroheme biosynthesis; sirohydrochlorin from precorrin-2: step 1/1. Its function is as follows. Multifunctional enzyme that catalyzes the SAM-dependent methylations of uroporphyrinogen III at position C-2 and C-7 to form precorrin-2 via precorrin-1. Then it catalyzes the NAD-dependent ring dehydrogenation of precorrin-2 to yield sirohydrochlorin. Finally, it catalyzes the ferrochelation of sirohydrochlorin to yield siroheme. The polypeptide is Siroheme synthase (Pseudomonas fluorescens (strain ATCC BAA-477 / NRRL B-23932 / Pf-5)).